The following is a 298-amino-acid chain: MIPITTPVGNFKVWTKRFGTNPKIKVLLLHGGPAMTHEYMECFETFFQREGFEFYEYDQLGSYYSDQPTDEKLWNIDRFVDEVEQVRKAIHADKENFYVLGNSWGGILAMEYALKYQQNLKGLIVANMMASAPEYVKYAEVLSKQMKPEVLAEVRAIEAKKDYANPRYTELLFPNYYAQHICRLKEWPDALNRSLKHVNSTVYTLMQGPSELGMSSDARLAKWDIKNRLHEIATPTLMIGARYDTMDPKAMEEQSKLVQKGRYLYCPNGSHLAMWDDQKVFMDGVIKFIKDVDTKSFN.

The AB hydrolase-1 domain maps to 26-277 (VLLLHGGPAM…NGSHLAMWDD (252 aa)). Ser-103 (nucleophile) is an active-site residue. Residue Asp-244 is part of the active site. His-271 acts as the Proton donor in catalysis.

Belongs to the peptidase S33 family. As to quaternary structure, monomer.

The enzyme catalyses Release of N-terminal proline from a peptide.. Its function is as follows. Releases the N-terminal proline from various substrates. Cleaves specifically Pro-betaNA and small peptides containing proline at the amino terminal. No activity against hydroxyproline-betaNA. The protein is Proline iminopeptidase (fpaP) of Elizabethkingia meningoseptica (Chryseobacterium meningosepticum).